A 64-amino-acid chain; its full sequence is MPKAKTHSGASKRFRRTGTGKIVRQKANRRHLMEHKPTKRTRRLAGRTQVSANDAPRINKMLNG.

Disordered stretches follow at residues 1 to 20 (MPKA…TGTG) and 37 to 64 (PTKR…MLNG).

Belongs to the bacterial ribosomal protein bL35 family.

This chain is Large ribosomal subunit protein bL35, found in Mycobacterium sp. (strain JLS).